We begin with the raw amino-acid sequence, 70 residues long: Drosomycin (70 aa).

Residues 1-20 (MMQIKYLFALFAVLMLVVLG) form the signal peptide. The propeptide occupies 21–26 (ANEADA). 4 disulfides stabilise this stretch: C28/C70, C37/C59, C45/C65, and C49/C67. N-linked (GlcNAc...) asparagine glycosylation occurs at N42.

Hemolymph (at protein level). Synthesized in the fat body and is secreted into the blood. In larvae, expressed in the visceral branches and posterior spiracles of the trachea.

The protein localises to the secreted. Functionally, possesses antifungal activity and is active against a relatively broad spectrum of filamentous fungi. It inhibits spore germination at high concentrations and at low concentrations delays growth of hyphae which subsequently exhibit abnormal morphology. Spz C-106 in the hemolymph controls expression of the antifungal peptide by acting as a ligand of Tl and inducing an intracellular signaling pathway. Part of a psh-dependent Toll pathway, which may function in activating the systematic immune response in response to localized melanization of the tracheal system. In Drosophila melanogaster (Fruit fly), this protein is Drosomycin (Drs).